The sequence spans 98 residues: Integration host factor subunit beta (98 aa).

Belongs to the bacterial histone-like protein family. As to quaternary structure, heterodimer of an alpha and a beta chain.

Its function is as follows. This protein is one of the two subunits of integration host factor, a specific DNA-binding protein that functions in genetic recombination as well as in transcriptional and translational control. The protein is Integration host factor subunit beta of Pseudomonas fluorescens (strain SBW25).